The chain runs to 441 residues: Serine/threonine-protein kinase prk-2 (441 aa).

In terms of domain architecture, Protein kinase spans 31–285 (YKLKAELGRG…LEAILNHPWV (255 aa)). ATP contacts are provided by residues 37–45 (LGRGGFGVV) and lysine 60. Aspartate 158 (proton acceptor) is an active-site residue. Residues 301-364 (QKKTSESSDD…NQKKPNHKEF (64 aa)) are disordered. Residues 303–320 (KTSESSDDHHSETLGDHS) show a composition bias toward basic and acidic residues. A compositionally biased stretch (polar residues) spans 328–338 (PPTSSVSQQPG).

Belongs to the protein kinase superfamily. Ser/Thr protein kinase family. PIM subfamily. Mg(2+) is required as a cofactor.

It catalyses the reaction L-seryl-[protein] + ATP = O-phospho-L-seryl-[protein] + ADP + H(+). It carries out the reaction L-threonyl-[protein] + ATP = O-phospho-L-threonyl-[protein] + ADP + H(+). Involved in the negative regulation of synaptic differentiation in PLM neurons. This Caenorhabditis elegans protein is Serine/threonine-protein kinase prk-2.